Here is a 329-residue protein sequence, read N- to C-terminus: Phospho-N-acetylmuramoyl-pentapeptide-transferase (329 aa).

Helical transmembrane passes span 1–21 (MLLN…IGIP), 53–73 (MGGF…ALVF), 76–96 (FSPA…IGFL), 109–129 (GLTA…SYFI), 141–161 (ILSW…IWLV), 175–195 (GLAS…AVVH), 198–218 (YDVL…FVFN), 237–257 (FLAI…IGAV), and 309–329 (IVFW…YFAF).

This sequence belongs to the glycosyltransferase 4 family. MraY subfamily. Mg(2+) is required as a cofactor.

Its subcellular location is the cell membrane. It catalyses the reaction UDP-N-acetyl-alpha-D-muramoyl-L-alanyl-gamma-D-glutamyl-L-lysyl-D-alanyl-D-alanine + di-trans,octa-cis-undecaprenyl phosphate = Mur2Ac(oyl-L-Ala-gamma-D-Glu-L-Lys-D-Ala-D-Ala)-di-trans,octa-cis-undecaprenyl diphosphate + UMP. It functions in the pathway cell wall biogenesis; peptidoglycan biosynthesis. In terms of biological role, catalyzes the initial step of the lipid cycle reactions in the biosynthesis of the cell wall peptidoglycan: transfers peptidoglycan precursor phospho-MurNAc-pentapeptide from UDP-MurNAc-pentapeptide onto the lipid carrier undecaprenyl phosphate, yielding undecaprenyl-pyrophosphoryl-MurNAc-pentapeptide, known as lipid I. This Lactococcus lactis subsp. cremoris (strain MG1363) protein is Phospho-N-acetylmuramoyl-pentapeptide-transferase.